Consider the following 71-residue polypeptide: Mitotic-spindle organizing protein 1B (71 aa).

Belongs to the MOZART1 family. In terms of assembly, homo- and heteromultimer. Part of the gamma-tubulin complex. Interacts with TUBB2/TUBB3, GIP2, GCP3 and TSA1 (via C-terminal domain). In terms of tissue distribution, mostly expressed in siliques and flowers, and, to a lower extent, in leaves, roots and seedlings, with highest levels in young tissues and meristematic cells, and the vasculature.

It is found in the cytoplasm. It localises to the cytoskeleton. Its subcellular location is the microtubule organizing center. The protein localises to the spindle. The protein resides in the nucleus. It is found in the phragmoplast. It localises to the nucleus envelope. Its function is as follows. Required for gamma-tubulin complex recruitment to the microtubule organizing centers (MTOCs). During mitosis, modulates gamma-tubulin complex localization, spindle stability and chromosomal segregation. Necessary for gametophyte development and embryogenesis. The polypeptide is Mitotic-spindle organizing protein 1B (GIP1) (Arabidopsis thaliana (Mouse-ear cress)).